The chain runs to 385 residues: Protein hunchback (385 aa).

Disordered stretches follow at residues 1 to 94 (IGGI…YDAM) and 124 to 216 (ESRA…PGLR). Residues 63–77 (SASPSSSSKDSNGHS) are compositionally biased toward low complexity. 2 stretches are compositionally biased toward basic and acidic residues: residues 126–135 (RASDARDHSP) and 173–203 (PERR…REGS). 4 C2H2-type zinc fingers span residues 229-251 (FKCK…SKEH), 258-280 (LCCR…MRNH), 286-308 (FQCS…LKSH), and 314-338 (YRCA…KYQH). A disordered region spans residues 361 to 385 (TRRGPKQKPLSKIFEQQTGTNNHSP). The span at 374-385 (FEQQTGTNNHSP) shows a compositional bias: polar residues.

This sequence belongs to the hunchback C2H2-type zinc-finger protein family.

The protein localises to the nucleus. In terms of biological role, gap class segmentation protein that controls development of head structures. This is Protein hunchback (hb) from Bombyx mori (Silk moth).